A 162-amino-acid polypeptide reads, in one-letter code: L-amino acid N-acetyltransferase AaaT (162 aa).

Residues 4 to 162 (IVIRHAETRD…VDAYYMARVK (159 aa)) enclose the N-acetyltransferase domain.

The protein belongs to the acetyltransferase family.

It catalyses the reaction L-phenylalanine + acetyl-CoA = N-acetyl-L-phenylalanine + CoA + H(+). The enzyme catalyses L-methionine + acetyl-CoA = N-acetyl-L-methionine + CoA + H(+). Functionally, catalyzes the N-acetylation of L-phenylalanine and L-methionine using acetyl-CoA as acetyl donor in vitro. Cannot accept L-tyrosine as substrate and propionyl-CoA, succinyl-CoA or (S)-methylmalonyl-CoA as acyl donors. Is also able to acetylate and thus detoxify several nonhydrolyzable aminoacyl adenylates, but not the processed form of the peptide-nucleotide antibiotic microcin C (McC). When overproduced, provides complete resistance to leucyl sulfamoyl adenylate (LSA) and partial resistance to alanyl sulfamoyl adenylate (ASA) and phenylalanyl sulfamoyl adenylate (FSA). Therefore, may protect bacteria from various toxic aminoacyl nucleotides, either exogenous or those generated inside the cell during normal metabolism. The polypeptide is L-amino acid N-acetyltransferase AaaT (Escherichia coli (strain K12)).